A 204-amino-acid chain; its full sequence is Large ribosomal subunit protein eL15 (204 aa).

Disordered regions lie at residues 71 to 91 and 159 to 182; these read RKRPVPKGATYGKPKSHGVNQ and REMRGKTSAGRKHRGLGRGFHYSQ. Positions 159–174 are enriched in basic residues; it reads REMRGKTSAGRKHRGL.

It belongs to the eukaryotic ribosomal protein eL15 family.

This is Large ribosomal subunit protein eL15 (RPL15) from Faxonius limosus (Spinycheek crayfish).